Consider the following 89-residue polypeptide: MAITQERKNQLINEFKTHESDTGSPEVQIAILTDSINNLNEHLRTHKKDHHSRRGLLKMVGKRRNLLTYLRNKDVTRYRELINKLGLRR.

Positions 1-21 are enriched in basic and acidic residues; that stretch reads MAITQERKNQLINEFKTHESD. The interval 1-24 is disordered; the sequence is MAITQERKNQLINEFKTHESDTGS.

The protein belongs to the universal ribosomal protein uS15 family. Part of the 30S ribosomal subunit. Forms a bridge to the 50S subunit in the 70S ribosome, contacting the 23S rRNA.

In terms of biological role, one of the primary rRNA binding proteins, it binds directly to 16S rRNA where it helps nucleate assembly of the platform of the 30S subunit by binding and bridging several RNA helices of the 16S rRNA. Functionally, forms an intersubunit bridge (bridge B4) with the 23S rRNA of the 50S subunit in the ribosome. This chain is Small ribosomal subunit protein uS15, found in Bacillus subtilis (strain 168).